An 820-amino-acid chain; its full sequence is Serine/threonine-protein phosphatase 4 regulatory subunit 3 (820 aa).

A WH1 domain is found at 1–100 (MSDTRRRVKV…DEIWEKICQV (100 aa)). 2 disordered regions span residues 687–711 (EDEEEEGEAVVPPVEKTKTEDDFPE) and 750–820 (AANG…RLGS). A compositionally biased stretch (basic and acidic residues) spans 701-711 (EKTKTEDDFPE). Over residues 750–761 (AANGANSTNSKS) the composition is skewed to polar residues. Residues 770 to 784 (SSNGSSSKNTSLTTT) show a composition bias toward low complexity. Acidic residues predominate over residues 798 to 809 (YPDDEDEEEEED).

Belongs to the SMEK family. In terms of assembly, serine/threonine-protein phosphatase 4 (PP4) occurs in different assemblies of the catalytic and one or more regulatory subunits.

Functionally, regulatory subunit of serine/threonine-protein phosphatase 4 (PP4). The chain is Serine/threonine-protein phosphatase 4 regulatory subunit 3 from Xenopus tropicalis (Western clawed frog).